The following is a 307-amino-acid chain: Protein phosphatase PTC7 homolog fig (307 aa).

Residues Val41 to Val300 form the PPM-type phosphatase domain. The Mn(2+) site is built by Asp77, Gly78, and Asp222.

It belongs to the PP2C family. Mg(2+) is required as a cofactor. The cofactor is Mn(2+).

It carries out the reaction O-phospho-L-seryl-[protein] + H2O = L-seryl-[protein] + phosphate. It catalyses the reaction O-phospho-L-threonyl-[protein] + H2O = L-threonyl-[protein] + phosphate. The sequence is that of Protein phosphatase PTC7 homolog fig from Drosophila grimshawi (Hawaiian fruit fly).